Here is a 51-residue protein sequence, read N- to C-terminus: Large ribosomal subunit protein eL39 (51 aa).

This sequence belongs to the eukaryotic ribosomal protein eL39 family.

This Hyperthermus butylicus (strain DSM 5456 / JCM 9403 / PLM1-5) protein is Large ribosomal subunit protein eL39.